A 732-amino-acid chain; its full sequence is Acetophenone carboxylase gamma subunit (732 aa).

This sequence belongs to the HyuA family. In terms of assembly, acetophenone carboxylase consists of five subunits; a heterooctameric subcomplex of two alpha (Apc1), two beta (Apc2), two gamma (Apc3) and two delta (Apc4) subunits assembles with the epsilon (Apc5) subunit in an unknown stoichiometry. The cofactor is Mg(2+). It depends on Mn(2+) as a cofactor.

Its subcellular location is the cytoplasm. The enzyme catalyses acetophenone + hydrogencarbonate + 2 ATP + H2O = 3-oxo-3-phenylpropanoate + 2 ADP + 2 phosphate + 2 H(+). Its activity is regulated as follows. Inhibited by zinc ions, carbamoylphosphate and beta,gamma-imido-ATP. Catalyzes the carboxylation of acetophenone to form 3-oxo-3-phenylpropanoate (benzoylacetate) in the anaerobic catabolism of ethylbenzene. Also carboxylates propiophenone at the same rate and 4-acetyl-pyridine at lower rates. The polypeptide is Acetophenone carboxylase gamma subunit (apc3) (Aromatoleum aromaticum (strain DSM 19018 / LMG 30748 / EbN1) (Azoarcus sp. (strain EbN1))).